We begin with the raw amino-acid sequence, 404 residues long: Hemocyanin, beta-C chain unit G (404 aa).

N-linked (GlcNAc...) asparagine glycosylation occurs at N38. A Cu cation-binding site is contributed by H50. Cysteines 56 and 65 form a disulfide. N-linked (GlcNAc...) asparagine glycosylation occurs at N60. Residue H61 participates in Cu cation binding. Positions 66 to 68 (CIH) form a cross-link, 2'-(S-cysteinyl)-histidine (Cys-His). Residues H77, H176, H180, and H207 each contribute to the Cu cation site. 2 disulfides stabilise this stretch: C166–C233 and C320–C326. N-linked (GlcNAc...) asparagine glycosylation is present at N378.

Belongs to the tyrosinase family. Hemocyanin subfamily. Decamers of large identical subunits (450 kDa), each containing 8 globular oxygen-binding functional units. Cu(2+) is required as a cofactor.

Hemocyanins are copper-containing oxygen carriers occurring freely dissolved in the hemolymph of many mollusks and arthropods. This is Hemocyanin, beta-C chain unit G from Helix pomatia (Roman snail).